The following is a 115-amino-acid chain: uncharacterized protein (115 aa).

The helical transmembrane segment at serine 36–glutamate 56 threads the bilayer.

It is found in the membrane. This is an uncharacterized protein from Saccharomyces cerevisiae (strain ATCC 204508 / S288c) (Baker's yeast).